The primary structure comprises 353 residues: Fasciculation and elongation protein zeta-2 (353 aa).

The tract at residues 19–49 is disordered; that stretch reads SLLDQENCNASPEPGAEAGAEAGGGADGFPA. Low complexity predominate over residues 28–38; the sequence is ASPEPGAEAGA. Phosphoserine is present on residues serine 135, serine 176, and serine 195. The stretch at 214-286 forms a coiled coil; the sequence is KRLSVSELNE…AKKKKKLKNG (73 aa). Residues 271-300 are disordered; it reads KEHKETAKKKKKLKNGSSQNGKNERSHMPG.

This sequence belongs to the zygin family. Homodimer; disulfide-linked. May form heterodimers with FEZ1. Interacts with synaptotagmin. As to expression, expressed in nonneural tissues, such as heart, lung, spleen, muscle, testis, placenta and melanocytes.

In terms of biological role, involved in axonal outgrowth and fasciculation. This chain is Fasciculation and elongation protein zeta-2 (FEZ2), found in Homo sapiens (Human).